The sequence spans 438 residues: DEAD-box ATP-dependent RNA helicase 58, chloroplastic (438 aa).

The N-terminal 44 residues, 1-44 (MAAFSGCASPLSTTLRSGLAPFTLRHRLRLRRLRASAATLREVC), are a transit peptide targeting the chloroplast. The Q motif motif lies at 41–69 (REVCAGRVPEHVLQRAEEVGYVVPTEVQE). Residues 72-245 (LPVLLSGQDC…DCVQHKWTKT (174 aa)) enclose the Helicase ATP-binding domain. 85–92 (AQTGSGKT) is an ATP binding site. A DEAD box motif is present at residues 190-193 (DEVD). Residues 274-436 (RLHVLLSLLE…ELPVESMFAF (163 aa)) enclose the Helicase C-terminal domain.

This sequence belongs to the DEAD box helicase family.

It is found in the plastid. The protein resides in the chloroplast. The catalysed reaction is ATP + H2O = ADP + phosphate + H(+). The polypeptide is DEAD-box ATP-dependent RNA helicase 58, chloroplastic (Oryza sativa subsp. japonica (Rice)).